A 444-amino-acid polypeptide reads, in one-letter code: Acyl-CoA 6-desaturase (444 aa).

Residues 1–122 (MGKGGNQDEG…FRALRKTAED (122 aa)) lie on the Cytoplasmic side of the membrane. The region spanning 18–95 (MPTFRWEEIQ…MKPLLIGELA (78 aa)) is the Cytochrome b5 heme-binding domain. The helical transmembrane segment at 123–143 (MNLFKSNQLFFLLHLAHIIAM) threads the bilayer. Over 144 to 147 (ESIA) the chain is Lumenal. The helical transmembrane segment at 148–168 (WFTLFYFGNGWIPTIITAFVL) threads the bilayer. At 169-264 (ATSQAQAGWL…KYLPYNHQHE (96 aa)) the chain is on the cytoplasmic side. A Histidine box-1 motif is present at residues 180–184 (HDYGH). Positions 217-221 (HFQHH) match the Histidine box-2 motif. The chain crosses the membrane as a helical span at residues 265–285 (YFFLIGPPLLIPLYFQYQIIM). The Lumenal portion of the chain corresponds to 286-305 (TMIVRKYWADLAWAISYYTR). The chain crosses the membrane as a helical span at residues 306 to 326 (FFITYIPFYGVLGSILFLNFI). Residues 327-444 (RFLESHWFVW…QLWLDAYLHK (118 aa)) are Cytoplasmic-facing. The Histidine box-3 signature appears at 382–386 (QIEHH).

It belongs to the fatty acid desaturase type 1 family.

The protein resides in the endoplasmic reticulum membrane. It carries out the reaction (9Z,12Z)-octadecadienoyl-CoA + 2 Fe(II)-[cytochrome b5] + O2 + 2 H(+) = (6Z,9Z,12Z)-octadecatrienoyl-CoA + 2 Fe(III)-[cytochrome b5] + 2 H2O. The enzyme catalyses (9Z,12Z,15Z)-octadecatrienoyl-CoA + 2 Fe(II)-[cytochrome b5] + O2 + 2 H(+) = (6Z,9Z,12Z,15Z)-octadecatetraenoyl-CoA + 2 Fe(III)-[cytochrome b5] + 2 H2O. It catalyses the reaction (9Z,12Z,15Z,18Z,21Z)-tetracosapentaenoyl-CoA + 2 Fe(II)-[cytochrome b5] + O2 + 2 H(+) = (6Z,9Z,12Z,15Z,18Z,21Z)-tetracosahexaenoyl-CoA + 2 Fe(III)-[cytochrome b5] + 2 H2O. The catalysed reaction is (11E)-octadecenoyl-CoA + 2 Fe(II)-[cytochrome b5] + O2 + 2 H(+) = (6Z,11E)-octadecadienoyl-CoA + 2 Fe(III)-[cytochrome b5] + 2 H2O. It carries out the reaction (11Z,14Z)-eicosadienoyl-CoA + 2 Fe(II)-[cytochrome b5] + O2 + 2 H(+) = (8Z,11Z,14Z)-eicosatrienoyl-CoA + 2 Fe(III)-[cytochrome b5] + 2 H2O. The enzyme catalyses (11Z,14Z,17Z)-eicosatrienoyl-CoA + 2 Fe(II)-[cytochrome b5] + O2 + 2 H(+) = (8Z,11Z,14Z,17Z)-eicosatetraenoyl-CoA + 2 Fe(III)-[cytochrome b5] + 2 H2O. Its pathway is lipid metabolism; polyunsaturated fatty acid biosynthesis. Involved in the biosynthesis of highly unsaturated fatty acids (HUFA) from the essential polyunsaturated fatty acids (PUFA) linoleic acid (LA) (18:2n-6) and alpha-linolenic acid (ALA) (18:3n-3) precursors, acting as a fatty acyl-coenzyme A (CoA) desaturase that introduces a cis double bond at carbon 6 of the fatty acyl chain. Catalyzes the first and rate limiting step in this pathway which is the desaturation of LA (18:2n-6) and ALA (18:3n-3) into gamma-linoleate (GLA) (18:3n-6) and stearidonate (18:4n-3), respectively. Subsequently, in the biosynthetic pathway of HUFA n-3 series, it desaturates tetracosapentaenoate (24:5n-3) to tetracosahexaenoate (24:6n-3), which is then converted to docosahexaenoate (DHA)(22:6n-3), an important lipid for nervous system function. It can also desaturate (11E)-octadecenoate (trans-vaccenoate, a metabolite in the biohydrogenation pathway of LA and the predominant trans fatty acid in cow milk) at carbon 6 generating (6Z,11E)-octadecadienoate. In addition to Delta-6 activity, this enzyme exhibits Delta-8 activity with slight biases toward n-3 fatty acyl-CoA substrates. The protein is Acyl-CoA 6-desaturase (FADS2) of Bos taurus (Bovine).